Reading from the N-terminus, the 26-residue chain is L-amino-acid oxidase (26 aa).

Belongs to the flavin monoamine oxidase family. In terms of assembly, monomer. The cofactor is FAD. Post-translationally, not glycosylated. Expressed by the ink gland.

It localises to the secreted. It carries out the reaction an L-alpha-amino acid + O2 + H2O = a 2-oxocarboxylate + H2O2 + NH4(+). In terms of biological role, catalyzes the oxidative deamination of positively charged L-amino acids L-Lys and L-Arg but not of amino acids L-His, L-Asp or L-Glu. Has antibacterial activity against the Gram-positive bacterium S.aureus (MIC=15 ug/ml). This antibacterial activity is bacteriostatic in the absence of amino acids L-Lys or L-Arg but bactericidal in their presence. The antibacterial effect is largely dependent on H(2)O(2) produced in the oxidative deamination of substrates. Has hemagglutinating activity towards rabbit erythrocytes. Hemagglutinating activity is inhibited by the glycoprotein fetuin, but not by glucose, mannose, galactose, N-acetylglucosamine, N-acetylgalactosamine or sialic acid. In Aplysia dactylomela (Spotted sea hare), this protein is L-amino-acid oxidase.